Here is a 216-residue protein sequence, read N- to C-terminus: Uracil phosphoribosyltransferase (216 aa).

5-phospho-alpha-D-ribose 1-diphosphate-binding positions include R85, R110, and 135 to 143; that span reads DPMVATGYS. Uracil-binding positions include I200 and 205-207; that span reads GDA. D206 is a binding site for 5-phospho-alpha-D-ribose 1-diphosphate.

Belongs to the UPRTase family. Mg(2+) is required as a cofactor.

It carries out the reaction UMP + diphosphate = 5-phospho-alpha-D-ribose 1-diphosphate + uracil. Its pathway is pyrimidine metabolism; UMP biosynthesis via salvage pathway; UMP from uracil: step 1/1. Allosterically activated by GTP. Catalyzes the conversion of uracil and 5-phospho-alpha-D-ribose 1-diphosphate (PRPP) to UMP and diphosphate. This chain is Uracil phosphoribosyltransferase, found in Burkholderia ambifaria (strain ATCC BAA-244 / DSM 16087 / CCUG 44356 / LMG 19182 / AMMD) (Burkholderia cepacia (strain AMMD)).